Here is a 955-residue protein sequence, read N- to C-terminus: Thrombospondin-4 (955 aa).

The N-terminal stretch at 1–24 (MPRRKGLCLFLQMLLLHLYGVCQA) is a signal peptide. Residues 25–192 (QPNYQVFDLL…MDELKLVMGG (168 aa)) enclose the Laminin G-like domain. The 40-residue stretch at 281–320 (PKPRCDATSCFRGVRCIDTEGGFQCGPCPEGYTGNGVICT) folds into the EGF-like 1 domain. Disulfide bonds link cysteine 285–cysteine 296, cysteine 290–cysteine 305, cysteine 308–cysteine 319, cysteine 325–cysteine 336, cysteine 330–cysteine 345, cysteine 348–cysteine 372, cysteine 378–cysteine 392, cysteine 386–cysteine 401, cysteine 404–cysteine 416, cysteine 422–cysteine 435, cysteine 429–cysteine 445, cysteine 447–cysteine 458, cysteine 474–cysteine 479, cysteine 484–cysteine 504, cysteine 520–cysteine 540, cysteine 543–cysteine 563, cysteine 579–cysteine 599, cysteine 602–cysteine 622, cysteine 640–cysteine 660, cysteine 680–cysteine 700, and cysteine 716–cysteine 937. The EGF-like 2; calcium-binding domain maps to 321 to 358 (DVDECRLNPCFLGVRCINTSPGFKCESCPPGYTGSTIQ). The EGF-like 3; calcium-binding domain maps to 374–415 (DTNECENGRNGGCTSNSLCINTMGSFRCGGCKPGYVGDQIKG). In terms of domain architecture, EGF-like 4 spans 418-459 (PEKSCRHGQNPCHASAQCSEEKDGDVTCTCSVGWAGNGYLCG). 8 TSP type-3 repeats span residues 460–492 (KDTD…NSGQ), 493–528 (EDTD…NIDQ), 529–551 (KNSD…NNDQ), 552–587 (RDTD…NVDQ), 588–610 (KDKD…NPNQ), 611–648 (SDID…NSNQ), 649–688 (LDTD…NPGQ), and 689–724 (EDDN…EITL). Asparagine 609 carries an N-linked (GlcNAc...) asparagine glycan. A disordered region spans residues 610-678 (QSDIDNDLVG…IPDTVPPGPD (69 aa)). Polar residues predominate over residues 637 to 649 (TDNCPTVINSNQL). Over residues 657–668 (GDECDDDDDNDG) the composition is skewed to acidic residues. Residues 728-942 (RAYQTVVLDP…LKYRCNDTIP (215 aa)) enclose the TSP C-terminal domain. A glycan (N-linked (GlcNAc...) asparagine) is linked at asparagine 938.

The protein belongs to the thrombospondin family. In terms of assembly, homotrimer; disulfide-linked.

It localises to the endoplasmic reticulum. Its subcellular location is the sarcoplasmic reticulum. The protein localises to the secreted. The protein resides in the extracellular space. It is found in the extracellular matrix. Adhesive glycoprotein that mediates cell-to-cell and cell-to-matrix interactions and may be involved in various processes including cellular proliferation, migration, adhesion and attachment. May play a role in ER stress response. May participate in the genesis and function of cardiac and skeletal muscle. This Xenopus laevis (African clawed frog) protein is Thrombospondin-4 (thbs4).